The primary structure comprises 25 residues: AEIDFSGIPEDIIKEIKETNAKPPA.

Residues 1 to 25 (AEIDFSGIPEDIIKEIKETNAKPPA) form a disordered region. The residue at position 6 (Ser6) is a Phosphoserine. A compositionally biased stretch (basic and acidic residues) spans 11–25 (DIIKEIKETNAKPPA).

It belongs to the non-disulfide-bridged peptide (NDBP) superfamily. As to expression, expressed by the venom gland.

It is found in the secreted. Its function is as follows. Agonist of the B2 bradykinin receptor (BDKRB2). Potentiates the hypotensive effect of bradykinin (BK) and induces a direct vasorelaxing effect, independently of BK, by endothelium- and nitric oxide (NO)-dependent mechanisms in rat aortic ring preparations. Does not inhibit the angiotensin-converting enzyme (ACE). Also exerts proangiogenic, antiinflammatory, and antifibrogenic activities. Does not inhibit the angiotensin-converting enzyme (ACE) but weakly increases its activity, and weakly inhibits neprilysin (NEP) in a non-competitive manner. Exerts intermediate cytotoxicity and pro-inflammatory effects on mouse macrophages, and increases the phagocytic activity of these murine cells. Functionally, presents weak hemolytic activity at physiological concentrations (micromolar range), and weak lactate dehydrogenase (LDH) release from mast cells. Does not induce mast cell degranulation, and antimicrobial effects. In vivo, causes intense pain (but no edema formation), when injected in mice hind paws. Also induces discomfort and anxiety in mice, as it moderately diminishes locomotion and moderately increases rearing behavior. This is Hypotensin-2 from Tityus serrulatus (Brazilian scorpion).